Reading from the N-terminus, the 438-residue chain is Transmembrane protein 184C (438 aa).

Transmembrane regions (helical) follow at residues 17-37 (LVAV…VWEL), 48-68 (AWFI…WVIL), 86-106 (ILWM…YPGI), 179-199 (YTVV…LGIY), 212-232 (YLVI…LLFY), 254-274 (VVFV…VGVI), and 287-307 (AVAT…AAIA). The disordered stretch occupies residues 355–438 (RGHPRKKLFP…KEPSDKSVDS (84 aa)). 2 stretches are compositionally biased toward low complexity: residues 374 to 390 (SLLS…ASSM) and 404 to 413 (TVTPQTTPTT). S422 carries the post-translational modification Phosphoserine. Residues 425-438 (IGEKKEPSDKSVDS) are compositionally biased toward basic and acidic residues.

Belongs to the TMEM184 family. As to expression, widely expressed with higher expression in lung, kidney, spleen, pancreas, thymus, prostate, testis, ovary, small intestine and thyroid.

Its subcellular location is the membrane. Functionally, possible tumor suppressor which may play a role in cell growth. This Homo sapiens (Human) protein is Transmembrane protein 184C (TMEM184C).